The chain runs to 497 residues: Guanosine-5'-triphosphate,3'-diphosphate pyrophosphatase (497 aa).

This sequence belongs to the GppA/Ppx family. GppA subfamily.

The enzyme catalyses guanosine 3'-diphosphate 5'-triphosphate + H2O = guanosine 3',5'-bis(diphosphate) + phosphate + H(+). It participates in purine metabolism; ppGpp biosynthesis; ppGpp from GTP: step 2/2. Its function is as follows. Catalyzes the conversion of pppGpp to ppGpp. Guanosine pentaphosphate (pppGpp) is a cytoplasmic signaling molecule which together with ppGpp controls the 'stringent response', an adaptive process that allows bacteria to respond to amino acid starvation, resulting in the coordinated regulation of numerous cellular activities. This Vibrio vulnificus (strain YJ016) protein is Guanosine-5'-triphosphate,3'-diphosphate pyrophosphatase.